The following is a 569-amino-acid chain: Alpha-keto-acid decarboxylase (569 aa).

Position 57 (E57) interacts with thiamine diphosphate. Residues 392–474 (TAFYGMVEHR…VVVNNDGYTI (83 aa)) form a thiamine pyrophosphate binding region. Mg(2+) is bound by residues D442, N469, and G471.

This sequence belongs to the TPP enzyme family. A metal cation serves as cofactor. Requires thiamine diphosphate as cofactor.

Functionally, decarboxylates branched-chain and aromatic alpha-keto acids to aldehydes. The chain is Alpha-keto-acid decarboxylase (kdc) from Mycobacterium leprae (strain TN).